A 166-amino-acid polypeptide reads, in one-letter code: Emerin homolog 1 (166 aa).

The LEM domain occupies 1 to 44; sequence MDVSQLTDAELRDSLKSHGVSVGPIVATTRKLYEKKLIKLSDGS. The Nuclear segment spans residues 1 to 127; that stretch reads MDVSQLTDAE…QAQSNKGGFL (127 aa). Positions 62–99 are disordered; that stretch reads IISSSPKKSPPQRVFQNVSAATAAATTSPESDSDDCEE. Residues 128 to 148 form a helical membrane-spanning segment; the sequence is GSTITFTILFVFIAVFAYFLI. Over 149–166 the chain is Perinuclear space; it reads ENAEQLKLVAETNPEDTI.

Interacts with lmn-1 and baf-1. As to expression, ubiquitous. Expressed in all cells, except in cells undergoing spermatogenesis. High expression in hypodermis, neurons, pharyngeal muscle, body wall muscle and gonadal sheath.

It localises to the nucleus inner membrane. The protein localises to the nucleus envelope. In terms of biological role, nuclear lamina-associated inner nuclear membrane protein that is involved in cell division, nuclear structure organization, maintenance of nuclear envelope integrity and nuclear envelope reformation after mitosis. Involved in chromosome segregation and cell division, probably via its interaction with the nuclear intermediate filament protein lmn-1, the main component of nuclear lamina. Required to organize the distribution of lmn-1, nuclear pore complexes (NPCs) and chromatin in mitotically active cells. Together with lem-2, plays a role in baf-1 enrichment at the nuclear envelope in anaphase. Together with lem-2, involved in muscle cell attachment to hypodermal cells, as well as muscle cell location and sarcomere organization. May play a role in radiation-induced DNA damage repair response. May repress binding of transcription factor pha-4 with target sequences in pharyngeal cells. In Caenorhabditis elegans, this protein is Emerin homolog 1 (emr-1).